Here is a 504-residue protein sequence, read N- to C-terminus: 13S globulin seed storage protein 2 (504 aa).

The first 20 residues, 1–20 (MSTKLILSFSLCLMVLSCSA), serve as a signal peptide directing secretion. 2 disulfide bridges follow: Cys46-Cys79 and Cys122-Cys320. The Cupin type-1 1 domain maps to 51 to 265 (LTASEPSRRV…FRDVDRETIS (215 aa)). Disordered stretches follow at residues 128 to 158 (SDSEFEYPQSQRGRHSRQSESEEESSRGDQH), 214 to 237 (GQSQRETREEGSDRQSRESDDDEA), and 289 to 314 (QDFEEEYERERGDRRRGQGGSGRSNG). Basic and acidic residues-rich tracts occupy residues 144-158 (RQSESEEESSRGDQH) and 218-231 (RETREEGSDRQSRE). One can recognise a Cupin type-1 2 domain in the interval 326–475 (RNFNTPTNTY…SYDISTKEAY (150 aa)).

Belongs to the 11S seed storage protein (globulins) family. In terms of assembly, hexamer; each subunit is composed of an acidic and a basic chain derived from a single precursor and linked by a disulfide bond.

In terms of biological role, seed storage protein. In Fagopyrum esculentum (Common buckwheat), this protein is 13S globulin seed storage protein 2 (FA18).